The chain runs to 733 residues: Oligopeptide transporter 8 (733 aa).

A run of 14 helical transmembrane segments spans residues 42 to 62, 66 to 86, 115 to 135, 147 to 167, 209 to 229, 244 to 264, 281 to 301, 357 to 377, 413 to 433, 442 to 462, 531 to 551, 596 to 616, 644 to 664, and 677 to 697; these read MWVLGITACVLLSFLNQFFWY, PLTISSVSAQIAVVPIGHLMA, VLITVFANSGSGAVYATHILS, FLPALLVMITTQVLGFGWAGL, FFVITLITSFSYYLLPGYLFT, SILVNQLGSGSAGLGIGSFGL, FFASANIAAGFFLVMYVITPL, FAVTYGLGFATLSASIFHVLI, LWWFLSIFAVNLAVIVFICIY, WWGAFLACLIAIFFTPLVGVI, VGTLVAVIAYAGTAWWLMAEI, YSNINWFFVGGAIAPALVYLA, ASAVNFTSWLVMAFVFGHFVF, and VLSGGMDAGTGFMSVLLFLAL.

Belongs to the oligopeptide OPT transporter (TC 2.A.67.1) family.

It is found in the membrane. In terms of biological role, may be involved in the translocation of tetra- and pentapeptides across the cellular membrane in an energy-dependent manner. The polypeptide is Oligopeptide transporter 8 (OPT8) (Arabidopsis thaliana (Mouse-ear cress)).